The sequence spans 213 residues: Kynurenine formamidase (213 aa).

Residue tryptophan 18 participates in substrate binding. Zn(2+)-binding residues include histidine 48, histidine 52, and aspartate 54. Catalysis depends on histidine 58, which acts as the Proton donor/acceptor. Residues histidine 160 and glutamate 172 each contribute to the Zn(2+) site.

This sequence belongs to the Cyclase 1 superfamily. KynB family. In terms of assembly, homodimer. The cofactor is Zn(2+).

The enzyme catalyses N-formyl-L-kynurenine + H2O = L-kynurenine + formate + H(+). It functions in the pathway amino-acid degradation; L-tryptophan degradation via kynurenine pathway; L-kynurenine from L-tryptophan: step 2/2. Catalyzes the hydrolysis of N-formyl-L-kynurenine to L-kynurenine, the second step in the kynurenine pathway of tryptophan degradation. In Burkholderia vietnamiensis (strain G4 / LMG 22486) (Burkholderia cepacia (strain R1808)), this protein is Kynurenine formamidase.